A 905-amino-acid chain; its full sequence is Catenin alpha-2 (905 aa).

Phosphothreonine is present on threonine 632. Serine 640, serine 651, and serine 853 each carry phosphoserine. A compositionally biased stretch (basic and acidic residues) spans valine 869–threonine 879. The tract at residues valine 869–serine 891 is disordered. Positions arginine 880–isoleucine 890 are enriched in basic residues. Serine 891 carries the phosphoserine modification.

The protein belongs to the vinculin/alpha-catenin family. Interacts with CDH1 and CDH2. Interacts with ZNF639; recruits CTNNA2 to the nucleus. Interacts with F-actin.

The protein resides in the cell membrane. Its subcellular location is the cytoplasm. The protein localises to the cytoskeleton. It localises to the cell junction. It is found in the adherens junction. The protein resides in the cell projection. Its subcellular location is the axon. The protein localises to the nucleus. Functionally, may function as a linker between cadherin adhesion receptors and the cytoskeleton to regulate cell-cell adhesion and differentiation in the nervous system. Required for proper regulation of cortical neuronal migration and neurite growth. It acts as a negative regulator of Arp2/3 complex activity and Arp2/3-mediated actin polymerization. It thereby suppresses excessive actin branching which would impair neurite growth and stability. Regulates morphological plasticity of synapses and cerebellar and hippocampal lamination during development. Functions in the control of startle modulation. The chain is Catenin alpha-2 (CTNNA2) from Pongo abelii (Sumatran orangutan).